The following is a 492-amino-acid chain: Aspartyl/glutamyl-tRNA(Asn/Gln) amidotransferase subunit B (492 aa).

Belongs to the GatB/GatE family. GatB subfamily. As to quaternary structure, heterotrimer of A, B and C subunits.

It catalyses the reaction L-glutamyl-tRNA(Gln) + L-glutamine + ATP + H2O = L-glutaminyl-tRNA(Gln) + L-glutamate + ADP + phosphate + H(+). The catalysed reaction is L-aspartyl-tRNA(Asn) + L-glutamine + ATP + H2O = L-asparaginyl-tRNA(Asn) + L-glutamate + ADP + phosphate + 2 H(+). Functionally, allows the formation of correctly charged Asn-tRNA(Asn) or Gln-tRNA(Gln) through the transamidation of misacylated Asp-tRNA(Asn) or Glu-tRNA(Gln) in organisms which lack either or both of asparaginyl-tRNA or glutaminyl-tRNA synthetases. The reaction takes place in the presence of glutamine and ATP through an activated phospho-Asp-tRNA(Asn) or phospho-Glu-tRNA(Gln). The chain is Aspartyl/glutamyl-tRNA(Asn/Gln) amidotransferase subunit B from Bradyrhizobium diazoefficiens (strain JCM 10833 / BCRC 13528 / IAM 13628 / NBRC 14792 / USDA 110).